A 313-amino-acid chain; its full sequence is Methionyl-tRNA formyltransferase (313 aa).

111–114 (SLLP) is a binding site for (6S)-5,6,7,8-tetrahydrofolate.

It belongs to the Fmt family.

The catalysed reaction is L-methionyl-tRNA(fMet) + (6R)-10-formyltetrahydrofolate = N-formyl-L-methionyl-tRNA(fMet) + (6S)-5,6,7,8-tetrahydrofolate + H(+). Its function is as follows. Attaches a formyl group to the free amino group of methionyl-tRNA(fMet). The formyl group appears to play a dual role in the initiator identity of N-formylmethionyl-tRNA by promoting its recognition by IF2 and preventing the misappropriation of this tRNA by the elongation apparatus. The polypeptide is Methionyl-tRNA formyltransferase (Mesoplasma florum (strain ATCC 33453 / NBRC 100688 / NCTC 11704 / L1) (Acholeplasma florum)).